A 615-amino-acid chain; its full sequence is MNAIPLRSAVTTQGRNAAGARALWRATGMTDQDFEKPIIAIANSYTQFVPGHVHLKDVGDIVADAIREAGGVPREFNTIAVDDGIAMGHAGMLYSLPSREVISDAVEYMVNGHAADALVCISNCDKITPGMLNAAMRLNIPVVFVSGGPMEAGKAVAVDGVVQAPTDLITAISASASDKVDAQALLEVESAACPTCGSCSGMFTANSMNCLTEALGLSLPGNGSTLATHAKRRDLFTKAGTTIVELCRRYYGEGDASVLPRNIATREAFENAMALDMAMGGSSNTVLHILAAAQEGEIDFDLHSIDQLSREVPCLSKVSPNSDYHMEDVHRGGGIPAILGELYRAGKLNEGVHSVHSATLKEWLLSWDIRSGAATEEAIELFHAAPGGVRTTAPFSTENRWSSLDTDAEGGVIRDVEHAYTADGGLVVLRGNLAEDGAVIKAAGVDPSIWHFEGKALVVESQEEAVRVILDKKVKPGHVVVVRYEGPAGGPGMQEMLHPTAFLKGAGLGKECALITDGRFSGGTSGLSVGHISPEAAHGGLIGLVRDGDPITIDVHERLLQLNISDEEIERRRAEMEASDKPWTPTTRQRKVTKALRAYAAMATSADRGAVREVK.

D83 lines the Mg(2+) pocket. Residue C124 coordinates [2Fe-2S] cluster. Positions 125 and 126 each coordinate Mg(2+). K126 is subject to N6-carboxylysine. C199 is a binding site for [2Fe-2S] cluster. A Mg(2+)-binding site is contributed by E495. The active-site Proton acceptor is the S521.

This sequence belongs to the IlvD/Edd family. In terms of assembly, homodimer. [2Fe-2S] cluster serves as cofactor. The cofactor is Mg(2+).

The catalysed reaction is (2R)-2,3-dihydroxy-3-methylbutanoate = 3-methyl-2-oxobutanoate + H2O. It catalyses the reaction (2R,3R)-2,3-dihydroxy-3-methylpentanoate = (S)-3-methyl-2-oxopentanoate + H2O. It participates in amino-acid biosynthesis; L-isoleucine biosynthesis; L-isoleucine from 2-oxobutanoate: step 3/4. The protein operates within amino-acid biosynthesis; L-valine biosynthesis; L-valine from pyruvate: step 3/4. Functions in the biosynthesis of branched-chain amino acids. Catalyzes the dehydration of (2R,3R)-2,3-dihydroxy-3-methylpentanoate (2,3-dihydroxy-3-methylvalerate) into 2-oxo-3-methylpentanoate (2-oxo-3-methylvalerate) and of (2R)-2,3-dihydroxy-3-methylbutanoate (2,3-dihydroxyisovalerate) into 2-oxo-3-methylbutanoate (2-oxoisovalerate), the penultimate precursor to L-isoleucine and L-valine, respectively. The protein is Dihydroxy-acid dehydratase of Corynebacterium jeikeium (strain K411).